A 201-amino-acid polypeptide reads, in one-letter code: 3-isopropylmalate dehydratase small subunit (201 aa).

Belongs to the LeuD family. LeuD type 1 subfamily. As to quaternary structure, heterodimer of LeuC and LeuD.

The catalysed reaction is (2R,3S)-3-isopropylmalate = (2S)-2-isopropylmalate. It participates in amino-acid biosynthesis; L-leucine biosynthesis; L-leucine from 3-methyl-2-oxobutanoate: step 2/4. Its function is as follows. Catalyzes the isomerization between 2-isopropylmalate and 3-isopropylmalate, via the formation of 2-isopropylmaleate. The chain is 3-isopropylmalate dehydratase small subunit (leuD) from Thermus thermophilus (strain ATCC 27634 / DSM 579 / HB8).